A 285-amino-acid chain; its full sequence is Bifunctional protein FolD (285 aa).

NADP(+) is bound by residues 165-167 (GRS), Ser-190, and Ile-231.

Belongs to the tetrahydrofolate dehydrogenase/cyclohydrolase family. As to quaternary structure, homodimer.

It carries out the reaction (6R)-5,10-methylene-5,6,7,8-tetrahydrofolate + NADP(+) = (6R)-5,10-methenyltetrahydrofolate + NADPH. The enzyme catalyses (6R)-5,10-methenyltetrahydrofolate + H2O = (6R)-10-formyltetrahydrofolate + H(+). The protein operates within one-carbon metabolism; tetrahydrofolate interconversion. In terms of biological role, catalyzes the oxidation of 5,10-methylenetetrahydrofolate to 5,10-methenyltetrahydrofolate and then the hydrolysis of 5,10-methenyltetrahydrofolate to 10-formyltetrahydrofolate. The protein is Bifunctional protein FolD of Acetivibrio thermocellus (strain ATCC 27405 / DSM 1237 / JCM 9322 / NBRC 103400 / NCIMB 10682 / NRRL B-4536 / VPI 7372) (Clostridium thermocellum).